Consider the following 627-residue polypeptide: DNA-directed RNA polymerase subunit gamma (627 aa).

Residues Cys-70, Cys-72, Cys-85, and Cys-88 each coordinate Zn(2+). Mg(2+) contacts are provided by Asp-468, Asp-470, and Asp-472.

This sequence belongs to the RNA polymerase beta' chain family. RpoC1 subfamily. In terms of assembly, in cyanobacteria the RNAP catalytic core is composed of 2 alpha, 1 beta, 1 beta', 1 gamma and 1 omega subunit. When a sigma factor is associated with the core the holoenzyme is formed, which can initiate transcription. Mg(2+) serves as cofactor. The cofactor is Zn(2+).

It catalyses the reaction RNA(n) + a ribonucleoside 5'-triphosphate = RNA(n+1) + diphosphate. In terms of biological role, DNA-dependent RNA polymerase catalyzes the transcription of DNA into RNA using the four ribonucleoside triphosphates as substrates. This chain is DNA-directed RNA polymerase subunit gamma, found in Synechococcus sp. (strain JA-2-3B'a(2-13)) (Cyanobacteria bacterium Yellowstone B-Prime).